Consider the following 173-residue polypeptide: Protein FAM180A (173 aa).

The signal sequence occupies residues 1–17 (MSWKALTILLVFSSTQA).

It belongs to the FAM180 family.

The protein localises to the secreted. This chain is Protein FAM180A (Fam180a), found in Mus musculus (Mouse).